A 132-amino-acid polypeptide reads, in one-letter code: Small ribosomal subunit protein uS8 (132 aa).

Belongs to the universal ribosomal protein uS8 family. Part of the 30S ribosomal subunit. Contacts proteins S5 and S12.

Its function is as follows. One of the primary rRNA binding proteins, it binds directly to 16S rRNA central domain where it helps coordinate assembly of the platform of the 30S subunit. This Pediococcus pentosaceus (strain ATCC 25745 / CCUG 21536 / LMG 10740 / 183-1w) protein is Small ribosomal subunit protein uS8.